The following is a 622-amino-acid chain: uncharacterized protein (622 aa).

4 residues coordinate [4Fe-4S] cluster: Cys-302, Cys-306, Cys-310, and Cys-521.

Belongs to the AOR/FOR family. [4Fe-4S] cluster serves as cofactor.

This is an uncharacterized protein from Methanocaldococcus jannaschii (strain ATCC 43067 / DSM 2661 / JAL-1 / JCM 10045 / NBRC 100440) (Methanococcus jannaschii).